Reading from the N-terminus, the 865-residue chain is Alanine--tRNA ligase (865 aa).

4 residues coordinate Zn(2+): His-552, His-556, Cys-654, and His-658.

It belongs to the class-II aminoacyl-tRNA synthetase family. It depends on Zn(2+) as a cofactor.

The protein localises to the cytoplasm. It catalyses the reaction tRNA(Ala) + L-alanine + ATP = L-alanyl-tRNA(Ala) + AMP + diphosphate. In terms of biological role, catalyzes the attachment of alanine to tRNA(Ala) in a two-step reaction: alanine is first activated by ATP to form Ala-AMP and then transferred to the acceptor end of tRNA(Ala). Also edits incorrectly charged Ser-tRNA(Ala) and Gly-tRNA(Ala) via its editing domain. This is Alanine--tRNA ligase from Coxiella burnetii (strain RSA 331 / Henzerling II).